The primary structure comprises 101 residues: Small ribosomal subunit protein uS14 (101 aa).

The protein belongs to the universal ribosomal protein uS14 family. In terms of assembly, part of the 30S ribosomal subunit. Contacts proteins S3 and S10.

In terms of biological role, binds 16S rRNA, required for the assembly of 30S particles and may also be responsible for determining the conformation of the 16S rRNA at the A site. This Protochlamydia amoebophila (strain UWE25) protein is Small ribosomal subunit protein uS14.